The following is a 302-amino-acid chain: Pathogenicity locus probable regulatory protein HrpS (302 aa).

Positions 9 to 237 (DDLDAERVPN…LKAAAKRHVL (229 aa)) constitute a Sigma-54 factor interaction domain. Residues 37-44 (GETGTGKD) and 99-108 (AQGGTLYLDE) contribute to the ATP site. The segment at residues 279–298 (IDAASLELDIPRRTLYRRIK) is a DNA-binding region (H-T-H motif).

Its function is as follows. Regulates the activation of the sigma factor HrpL which itself induces the expression of hprD as well as other hrp loci which are involved in plant pathogenicity, hrmA and avr genes. Probably interacts with sigma-54. The sequence is that of Pathogenicity locus probable regulatory protein HrpS (hrpS) from Pseudomonas syringae pv. syringae.